The primary structure comprises 331 residues: Phosphoribosylformylglycinamidine cyclo-ligase (331 aa).

It belongs to the AIR synthase family.

Its subcellular location is the cytoplasm. It carries out the reaction 2-formamido-N(1)-(5-O-phospho-beta-D-ribosyl)acetamidine + ATP = 5-amino-1-(5-phospho-beta-D-ribosyl)imidazole + ADP + phosphate + H(+). Its pathway is purine metabolism; IMP biosynthesis via de novo pathway; 5-amino-1-(5-phospho-D-ribosyl)imidazole from N(2)-formyl-N(1)-(5-phospho-D-ribosyl)glycinamide: step 2/2. The polypeptide is Phosphoribosylformylglycinamidine cyclo-ligase (Clostridium botulinum (strain Okra / Type B1)).